The following is a 230-amino-acid chain: Ribose-5-phosphate isomerase A (230 aa).

Residues threonine 32 to threonine 35, aspartate 85 to aspartate 88, and lysine 98 to glycine 101 each bind substrate. The Proton acceptor role is filled by glutamate 107. Lysine 125 serves as a coordination point for substrate.

The protein belongs to the ribose 5-phosphate isomerase family. As to quaternary structure, homodimer.

The enzyme catalyses aldehydo-D-ribose 5-phosphate = D-ribulose 5-phosphate. It participates in carbohydrate degradation; pentose phosphate pathway; D-ribose 5-phosphate from D-ribulose 5-phosphate (non-oxidative stage): step 1/1. In terms of biological role, catalyzes the reversible conversion of ribose-5-phosphate to ribulose 5-phosphate. This is Ribose-5-phosphate isomerase A from Burkholderia ambifaria (strain MC40-6).